The primary structure comprises 586 residues: Protein HOL1 (586 aa).

Topologically, residues 1 to 66 (MDKYTNRDHP…NWSSWRKLAH (66 aa)) are extracellular. A helical membrane pass occupies residues 67-87 (FGLMAFITAFTAATSNDAGAA). The Cytoplasmic segment spans residues 88 to 103 (QDSLNEIYGISYDSMN). A helical membrane pass occupies residues 104 to 124 (TGAGVLFLGIGWSTLFLAPFA). Residues 125 to 130 (NLYGRK) are Extracellular-facing. The helical transmembrane segment at 131-151 (ITYIVCTTLGLFGALWFALAK) threads the bilayer. At 152-189 (RTSDTIWSQLFVGISESCAEAQVQLSLSDIFFQHQLGS) the chain is on the cytoplasmic side. A helical membrane pass occupies residues 190–210 (VLTVYIMCTSIGTFLGPLIAG). Over 211-219 (YISAFTNFR) the chain is Extracellular. Residues 220–240 (WVGWVAVIISGGLLITIIFGC) traverse the membrane as a helical segment. At 241–362 (EETYFDRGQY…YFKYLKINLR (122 aa)) the chain is on the cytoplasmic side. The helical transmembrane segment at 363-383 (MFLFPPVWLSGMFWGIQDVFL) threads the bilayer. The Extracellular segment spans residues 384-413 (TFYLTTQESAYYEPPWNYSDFGVAIMNVPT). A helical membrane pass occupies residues 414 to 434 (LIGAVIGCICAGIVSDYFVLW). The Cytoplasmic portion of the chain corresponds to 435–448 (MARHNRGILEAEFR). The helical transmembrane segment at 449–469 (LYFSIATAIIGPAGLLMFGIG) threads the bilayer. The Extracellular segment spans residues 470-477 (TARQWPWQ). A helical transmembrane segment spans residues 478 to 498 (AIYVGLGFVGFAWGCSGDIAM). Over 499–508 (AYLMDCYPDM) the chain is Cytoplasmic. A helical membrane pass occupies residues 509–529 (VLEGMVCTAIINNTISCIFTF). Residues 530 to 544 (TCSDWLAASGTENTY) are Extracellular-facing. A helical membrane pass occupies residues 545–565 (IALAVINFGITAFALPMYYYG). Topologically, residues 566–586 (KRIRLWTKRWYLQSVNLRDGV) are cytoplasmic.

It is found in the membrane. Functionally, seems to be involved in the uptake of several cations and of histidinol. The chain is Protein HOL1 (HOL1) from Saccharomyces cerevisiae (strain ATCC 204508 / S288c) (Baker's yeast).